Reading from the N-terminus, the 147-residue chain is Large ribosomal subunit protein uL13 (147 aa).

It belongs to the universal ribosomal protein uL13 family. In terms of assembly, part of the 50S ribosomal subunit.

In terms of biological role, this protein is one of the early assembly proteins of the 50S ribosomal subunit, although it is not seen to bind rRNA by itself. It is important during the early stages of 50S assembly. In Frankia casuarinae (strain DSM 45818 / CECT 9043 / HFP020203 / CcI3), this protein is Large ribosomal subunit protein uL13.